Reading from the N-terminus, the 502-residue chain is Protein IWS1 homolog 1 (502 aa).

Positions 1-12 (MGFEDDPYRDVD) are enriched in basic and acidic residues. 2 disordered regions span residues 1-61 (MGFE…DNDK) and 87-208 (DEDV…DEDE). Acidic residues-rich tracts occupy residues 13 to 22 (GEPIVDFDDF), 34 to 49 (QDFDEDLADDIGDWDG), and 87 to 97 (DEDVDDAEFDE). Basic and acidic residues-rich tracts occupy residues 138 to 151 (NRGERKSEEIDEMW) and 181 to 194 (PSERYGGDAGDRSP). Position 185 is a phosphotyrosine (Y185). The TFIIS N-terminal domain maps to 287–370 (TLLKNWLEPL…DKWSRPIFNK (84 aa)). The interval 385-434 (VPYRRPPVKKPSNKATMESRDGDFDLEIRERKTGLTSGQSSRGDRQMTMR) is disordered. Residues 401–417 (MESRDGDFDLEIRERKT) are compositionally biased toward basic and acidic residues.

It belongs to the IWS1 family. In terms of assembly, interacts with BZR2/BES1 and SPT6 (via N-terminus). Interacts with ASHH2/SDG8.

It is found in the nucleus. Functionally, transcription factor involved in RNA polymerase II (RNAPII) transcription regulation. Involved in transcription elongation. May function at post-recruitment and elongation steps of transcription. May be recruited by BZR2/BES1 to target genes and promote their expression during transcription elongation process. Required for brassinosteroid (BR)-induced gene expression. Required the for regulation of numerous nitrogen-responsive genes in roots. Acts in roots to repress NRT2.1 transcription in response to high nitrogen supply. This repression is associated with an IWS1-dependent increase of trimethylation on 'Lys-27' H3K27me3 at the NRT2.1 locus. The sequence is that of Protein IWS1 homolog 1 from Arabidopsis thaliana (Mouse-ear cress).